A 101-amino-acid polypeptide reads, in one-letter code: Urease subunit beta (101 aa).

It belongs to the urease beta subunit family. Heterotrimer of UreA (gamma), UreB (beta) and UreC (alpha) subunits. Three heterotrimers associate to form the active enzyme.

Its subcellular location is the cytoplasm. The enzyme catalyses urea + 2 H2O + H(+) = hydrogencarbonate + 2 NH4(+). It functions in the pathway nitrogen metabolism; urea degradation; CO(2) and NH(3) from urea (urease route): step 1/1. This Chelativorans sp. (strain BNC1) protein is Urease subunit beta.